We begin with the raw amino-acid sequence, 953 residues long: Atromentin synthetase invA5 (953 aa).

Residues 37 to 460 (SRAVSQYPDH…SGRIKDTVIV (424 aa)) form an adenylation (A) domain region. The region spanning 592–670 (APSTETEKTL…SLAKYVDSLI (79 aa)) is the Carrier domain. The tract at residues 597–667 (TEKTLAGIYA…VISSLAKYVD (71 aa)) is thiolation and peptide carrier (T) domain. Serine 629 bears the O-(pantetheine 4'-phosphoryl)serine mark. The segment at 693 to 795 (PIFMVHPGVG…FTGLINIPPN (103 aa)) is thioesterase (TE) domain.

This sequence belongs to the ATP-dependent AMP-binding enzyme family.

It participates in secondary metabolite biosynthesis. An L-tyrosine:2-oxoglutarate aminotransferase (probably invD) and atromentin synthetase invA5 catalyze consecutive steps to turn over L-tyrosine into atromentin, which represents the generic precursor molecule for the entire terphenylquinone and pulvinic acid family of pigments, which are widely distributed secondary metabolites in homobasidiomycetes. The first step catalyzed by the aminotransferase converts L-tyrosine in to 4-hydroxyphenylpyruvate (4-HPP). Adenylation of two 4-HPP monomers by the invA5 adenylation (A) domain, covalent tethering of the monomers as a thioester and oxoester onto the invA5 thiolation (T) and thioesterase (TE) domains, respectively, and symmetric C-C-bond formation between two monomers catalyzed by the invA5 TE domain leads to atromentin. The protein is Atromentin synthetase invA5 (invA5) of Paxillus involutus (Naked brimcap).